The primary structure comprises 230 residues: Secretory carrier-associated membrane protein 4 (230 aa).

Residues 1–39 (MAGKENNFPPLPPFLPLKPCFYQDFSDEIPVEHQVLVKR) lie on the Cytoplasmic side of the membrane. Helical transmembrane passes span 40–60 (IYRL…ACLA), 61–81 (WWIA…LVLF), 106–126 (MTFF…AIGF), and 149–169 (VVML…AVTI). The Cytoplasmic portion of the chain corresponds to 170–230 (VKVHRIYRGA…SYSSSGGHWP (61 aa)). The residue at position 194 (Thr194) is a Phosphothreonine.

This sequence belongs to the SCAMP family.

It localises to the membrane. In terms of biological role, probably involved in membrane protein trafficking. The protein is Secretory carrier-associated membrane protein 4 (Scamp4) of Mus musculus (Mouse).